The following is a 31-amino-acid chain: Photosystem II reaction center protein T (31 aa).

The chain crosses the membrane as a helical span at residues 3–23; the sequence is SFAYILILAFSIGTLFFAIAL.

Belongs to the PsbT family. As to quaternary structure, PSII is composed of 1 copy each of membrane proteins PsbA, PsbB, PsbC, PsbD, PsbE, PsbF, PsbH, PsbI, PsbJ, PsbK, PsbL, PsbM, PsbT, PsbX, PsbY, PsbZ, Psb30/Ycf12, peripheral proteins PsbO, CyanoQ (PsbQ), PsbU, PsbV and a large number of cofactors. It forms dimeric complexes.

It localises to the cellular thylakoid membrane. In terms of biological role, found at the monomer-monomer interface of the photosystem II (PS II) dimer, plays a role in assembly and dimerization of PSII. PSII is a light-driven water plastoquinone oxidoreductase, using light energy to abstract electrons from H(2)O, generating a proton gradient subsequently used for ATP formation. In Synechococcus sp. (strain RCC307), this protein is Photosystem II reaction center protein T.